The following is a 309-amino-acid chain: Putative taste receptor type 2 member 33 (309 aa).

Residue M1 is a topological domain, extracellular. Residues 2–22 form a helical membrane-spanning segment; the sequence is VYFLPIIFSILVVFAFVLGNF. The Cytoplasmic portion of the chain corresponds to 23 to 46; it reads SNGFIALVNVIDWVKRQKISSADQ. A helical membrane pass occupies residues 47-67; that stretch reads ILTALVVSRVGLLWVILLHWY. The Extracellular portion of the chain corresponds to 68-86; the sequence is ANVFNSALYSLEVRIVASN. An N-linked (GlcNAc...) asparagine glycan is attached at N86. A helical transmembrane segment spans residues 87–107; sequence ISAVINHFSIWLAASLSIFYL. Residues 108–127 are Cytoplasmic-facing; sequence LKIANFSNLIFLHLKKRIKS. A helical transmembrane segment spans residues 128-148; it reads VVLVILLGPLVFLICNLAVIT. At 149–181 the chain is on the extracellular side; it reads MDERVWTKEYEGNVTWKIKLRNAIHLSSLTVTT. N-linked (GlcNAc...) asparagine glycosylation is present at N161. A helical membrane pass occupies residues 182 to 202; sequence LANLIPFTLSLICFLLLICSL. Over 203–229 the chain is Cytoplasmic; that stretch reads CKHLKKMQLHSKGSQDPSTKVHIKALQ. Residues 230–250 traverse the membrane as a helical segment; that stretch reads TVISFLMLCAIYFLSIMISVW. At 251–259 the chain is on the extracellular side; that stretch reads NLRSLENKP. A helical transmembrane segment spans residues 260 to 280; it reads VFMFCKAIRFSYPSIHPFILI. At 281 to 309 the chain is on the cytoplasmic side; it reads WGNKKLKQTFLSVFWQVRYWVKGEKPSSP.

It belongs to the G-protein coupled receptor T2R family.

It localises to the membrane. Its function is as follows. Putative taste receptor which may play a role in the perception of bitterness. The sequence is that of Putative taste receptor type 2 member 33 from Homo sapiens (Human).